Consider the following 270-residue polypeptide: Glutamate racemase (270 aa).

Substrate-binding positions include 10 to 11 and 42 to 43; these read DS and YG. The Proton donor/acceptor role is filled by C74. Position 75–76 (75–76) interacts with substrate; it reads NT. C189 functions as the Proton donor/acceptor in the catalytic mechanism. A substrate-binding site is contributed by 190–191; sequence TH.

Belongs to the aspartate/glutamate racemases family.

It catalyses the reaction L-glutamate = D-glutamate. It functions in the pathway cell wall biogenesis; peptidoglycan biosynthesis. In terms of biological role, provides the (R)-glutamate required for cell wall biosynthesis. The protein is Glutamate racemase of Bartonella quintana (strain Toulouse) (Rochalimaea quintana).